A 184-amino-acid chain; its full sequence is Adenine phosphoribosyltransferase (184 aa).

It belongs to the purine/pyrimidine phosphoribosyltransferase family. In terms of assembly, homodimer.

The protein resides in the cytoplasm. The catalysed reaction is AMP + diphosphate = 5-phospho-alpha-D-ribose 1-diphosphate + adenine. It participates in purine metabolism; AMP biosynthesis via salvage pathway; AMP from adenine: step 1/1. Its function is as follows. Catalyzes a salvage reaction resulting in the formation of AMP, that is energically less costly than de novo synthesis. The protein is Adenine phosphoribosyltransferase of Shewanella putrefaciens (strain CN-32 / ATCC BAA-453).